The chain runs to 343 residues: MIPWGGVTCCLSAAALYLLGRSSGRDAEVLETVTRVNQLKELAQLLELDSKILPFIVAVSGRVGSETPIKCEHSGIRGVIVEETAEQHFLKHNETGSWVQDSALMLSMSKEVPWFLDDGTSRVHVMGARGATGFALTVGSEVFEESGRSLVRGTLDYLQGLKMLGVKRIERVLPTGIPLTIVGEAVKDDIGEFRIQKPDRGPFYVSSKSLDQLISNLGKWSRLYKYASMGFTVLGVFLITKHVIDSVLERRRRRQLQKRVLDAAAKRAELESEGSNGTRESISDSTKKEDAVPDLCVICLEQEYNAVFVPCGHMCCCTACSSHLTSCPLCRRRIDLAVKTYRH.

The helical transmembrane segment at 1–21 threads the bilayer; it reads MIPWGGVTCCLSAAALYLLGR. At 22 to 222 the chain is on the chloroplast intermembrane side; that stretch reads SSGRDAEVLE…LISNLGKWSR (201 aa). A helical membrane pass occupies residues 223 to 244; that stretch reads LYKYASMGFTVLGVFLITKHVI. The Cytoplasmic portion of the chain corresponds to 245-343; the sequence is DSVLERRRRR…IDLAVKTYRH (99 aa). The RING-type zinc finger occupies 296–331; sequence CVICLEQEYNAVFVPCGHMCCCTACSSHLTSCPLCR.

Interacts with TOC33, TOC75-3 and TOC159. In terms of processing, auto-ubiquitinated.

Its subcellular location is the plastid. It localises to the chloroplast outer membrane. The enzyme catalyses S-ubiquitinyl-[E2 ubiquitin-conjugating enzyme]-L-cysteine + [acceptor protein]-L-lysine = [E2 ubiquitin-conjugating enzyme]-L-cysteine + N(6)-ubiquitinyl-[acceptor protein]-L-lysine.. Its pathway is protein modification; protein ubiquitination. Functionally, E3 ubiquitin-protein ligase involved in the regulation of protein import in the chloroplast. Associates with TOC complexes and mediates ubiquitination of TOC components, promoting their degradation via the ubiquitin-proteasome system (UPS). Plays a role in the reorganization of the TOC machinery. Involved in a mechanism that regulates plastid biogenesis via UPS. Promotes stress tolerance by depleting the chloroplast protein import apparatus, which limits photosystem assembly and the potential for reactive oxygen species (ROS) formation. May act as negative regulator of programmed cell death (PCD) during biotic stress. This Arabidopsis thaliana (Mouse-ear cress) protein is E3 ubiquitin-protein ligase SP1.